Consider the following 347-residue polypeptide: DNA-directed RNA polymerase subunit alpha (347 aa).

Residues 1-226 are alpha N-terminal domain (alpha-NTD); that stretch reads MLISQRPTLS…ELFGLARELN (226 aa). The alpha C-terminal domain (alpha-CTD) stretch occupies residues 241 to 347; it reads ADHIASFALP…DQDYAETEQL (107 aa).

The protein belongs to the RNA polymerase alpha chain family. In terms of assembly, homodimer. The RNAP catalytic core consists of 2 alpha, 1 beta, 1 beta' and 1 omega subunit. When a sigma factor is associated with the core the holoenzyme is formed, which can initiate transcription.

It catalyses the reaction RNA(n) + a ribonucleoside 5'-triphosphate = RNA(n+1) + diphosphate. DNA-dependent RNA polymerase catalyzes the transcription of DNA into RNA using the four ribonucleoside triphosphates as substrates. This is DNA-directed RNA polymerase subunit alpha from Mycobacterium avium (strain 104).